A 421-amino-acid chain; its full sequence is Lipid II:glycine glycyltransferase (421 aa).

It belongs to the FemABX family. As to quaternary structure, monomer.

The protein localises to the cytoplasm. It catalyses the reaction beta-D-GlcNAc-(1-&gt;4)-Mur2Ac(oyl-L-Ala-D-isoglutaminyl-L-Lys-D-Ala-D-Ala)-di-trans,octa-cis-undecaprenyl diphosphate + glycyl-tRNA(Gly) = beta-D-GlcNAc-(1-&gt;4)-Mur2Ac(oyl-L-Ala-D-isoglutaminyl-L-Lys-(N(6)-Gly)-D-Ala-D-Ala)-di-trans,octa-cis-undecaprenyl diphosphate + tRNA(Gly) + H(+). In terms of biological role, catalyzes the incorporation of the first glycine of the pentaglycine interpeptide bridge, which is characteristic of the S.aureus peptidoglycan. This glycine is added to the epsilon-amino group of the L-lysine of the membrane-bound lipid II intermediate (GlcNAc-(beta-1,4)-N-acetylmuramic acid(-L-Ala-D-iGln-L-Lys-D-Ala-D-Ala)-pyrophosphoryl-undecaprenol), using glycyl-tRNA(Gly) as donor, in a ribosome-independent mechanism. In Staphylococcus aureus (strain MSSA476), this protein is Lipid II:glycine glycyltransferase (femX).